Consider the following 162-residue polypeptide: NADH-ubiquinone oxidoreductase chain 6 (162 aa).

The next 4 helical transmembrane spans lie at 1-21 (MIFYTVLVLMFLGSTLVFYSL), 46-66 (FSFIALVLILIYVGGMLVVFV), 84-104 (EILVLSSLVISWGVLNFDPLI), and 130-150 (GGYLLIGGYILLVALVVALVL).

It belongs to the complex I subunit 6 family.

Its subcellular location is the mitochondrion membrane. The enzyme catalyses a ubiquinone + NADH + 5 H(+)(in) = a ubiquinol + NAD(+) + 4 H(+)(out). Functionally, core subunit of the mitochondrial membrane respiratory chain NADH dehydrogenase (Complex I) that is believed to belong to the minimal assembly required for catalysis. Complex I functions in the transfer of electrons from NADH to the respiratory chain. The immediate electron acceptor for the enzyme is believed to be ubiquinone. In Patiria pectinifera (Starfish), this protein is NADH-ubiquinone oxidoreductase chain 6 (ND6).